The chain runs to 153 residues: Regulator of sigma D (153 aa).

This sequence belongs to the Rsd/AlgQ family. Interacts with RpoD.

The protein localises to the cytoplasm. Binds RpoD and negatively regulates RpoD-mediated transcription activation by preventing the interaction between the primary sigma factor RpoD with the catalytic core of the RNA polymerase and with promoter DNA. May be involved in replacement of the RNA polymerase sigma subunit from RpoD to RpoS during the transition from exponential growth to the stationary phase. This chain is Regulator of sigma D, found in Pectobacterium carotovorum subsp. carotovorum (strain PC1).